We begin with the raw amino-acid sequence, 187 residues long: Peroxisome assembly protein 22 (187 aa).

The helical transmembrane segment at 7 to 29 (NTFFGLAALGALGLGYSVYKSFI) threads the bilayer.

This sequence belongs to the peroxin-22 family. Interacts with PEX4.

The protein localises to the peroxisome membrane. Its function is as follows. Involved in peroxisome biogenesis. The polypeptide is Peroxisome assembly protein 22 (PEX22) (Komagataella pastoris (Yeast)).